The chain runs to 879 residues: MHLHLLLILALFRAGCVVAGPSYSLSGSWRVSNGNGSLELPATVPGYVHSALHQHGLIQDPYYRFNDLNYRWISLDNWTYSTEFKIPFNLSEWQKVKLIFDGVDTVAEILFNNVTIGKTDNMFTGYSFDITNVVKDVNSLKLQFRSAVQYAECQSKAHTSYRVPPECPPVEQKGECHVNFIRKAQCSFSWDWGPSFPSQGIWKDVRIEAYNIAHLDYLTFLPVYDNASQAWNIEIKASFDVASSKSVGGQVTVAIPQLKTQQTNDIELQQEQRIVKLLVKIRKDVAVETWWPRGHGNQTGYNMTILFALDGGLKIEKAAKVYFRTVQLIEEGIKGSPGLSFYFKINGLPIFLKGSNWIPADSFQDKVTSDRLQLLFQSVVDANMNTLRVWGGGIYEQDEFYALCDELGIMVWQDFMFASALYPTEPGFLASVRKEVTYQVRRLKSHPSIIIWSGNNENEVALSVNWFHVNPRDMKTYIDDYVTLYVKNIRKIVLSEDKSRPFIASSPTNGMKTMEEGWISYDPYSIQYGDIHFYNYADDCWNWKIFPKARLVSEYGYQSWPSFSTLEKVSSQEDWAYNSRFSLHRQHHEDGNHQMLHQVKMHFKLPQGTDPLRTFKDTIYLTQVMQAQCIKTETEFYLRSRSEIVDGKGHTMGALYWQLNDIWQAPSWASLEYGGKWKMLHYFARRFFAPLLPVGFEDEGVFYVYGVSDLHKDHHTQLTVRLHHWSSPKPLCSLVNSSIVVKAGEAVVLFQMPVSELLKRCRGCTRETCVVSFYFSTDKELFSPTNYHFLSSLKDAKGLLEANITVNISQKGNVFVFDLETSAVAPFVWLDVGSIPGRFSDNGFLMIRKKLSVLFYPWKPTSKSELQQAFSVTSLTDTY.

Residues 1–19 (MHLHLLLILALFRAGCVVA) form the signal peptide. 4 N-linked (GlcNAc...) asparagine glycosylation sites follow: N35, N77, N89, and N113. C167 and C176 are disulfide-bonded. 190 to 192 (WDW) provides a ligand contact to substrate. N-linked (GlcNAc...) asparagine glycans are attached at residues N226, N297, and N302. N456 is a binding site for substrate. E457 (proton donor) is an active-site residue. Disulfide bonds link C540-C629, C732-C761, and C764-C769. Residue E554 is the Nucleophile of the active site. The N-linked (GlcNAc...) asparagine glycan is linked to N736. 2 N-linked (GlcNAc...) asparagine glycosylation sites follow: N803 and N807.

This sequence belongs to the glycosyl hydrolase 2 family. In terms of assembly, monomer. Highest level in liver, high levels in lung, testis, skin and spleen, moderate level in thymus. Activity found in plasma, kidney, liver, spleen, pancreas, brain, testis, epididymis, heart, lung and skeletal muscle.

Its subcellular location is the lysosome. It catalyses the reaction Hydrolysis of terminal, non-reducing beta-D-mannose residues in beta-D-mannosides.. It participates in glycan metabolism; N-glycan degradation. Functionally, exoglycosidase that cleaves the single beta-linked mannose residue from the non-reducing end of all N-linked glycoprotein oligosaccharides. The protein is Beta-mannosidase of Mus musculus (Mouse).